The following is a 239-amino-acid chain: Phosphoribosylaminoimidazole-succinocarboxamide synthase (239 aa).

Belongs to the SAICAR synthetase family.

It carries out the reaction 5-amino-1-(5-phospho-D-ribosyl)imidazole-4-carboxylate + L-aspartate + ATP = (2S)-2-[5-amino-1-(5-phospho-beta-D-ribosyl)imidazole-4-carboxamido]succinate + ADP + phosphate + 2 H(+). The protein operates within purine metabolism; IMP biosynthesis via de novo pathway; 5-amino-1-(5-phospho-D-ribosyl)imidazole-4-carboxamide from 5-amino-1-(5-phospho-D-ribosyl)imidazole-4-carboxylate: step 1/2. The chain is Phosphoribosylaminoimidazole-succinocarboxamide synthase from Dichelobacter nodosus (strain VCS1703A).